The primary structure comprises 96 residues: Large ribosomal subunit protein bL28 (96 aa).

It belongs to the bacterial ribosomal protein bL28 family.

This chain is Large ribosomal subunit protein bL28, found in Methylobacterium nodulans (strain LMG 21967 / CNCM I-2342 / ORS 2060).